The chain runs to 180 residues: ATP synthase subunit delta (180 aa).

It belongs to the ATPase delta chain family. As to quaternary structure, F-type ATPases have 2 components, F(1) - the catalytic core - and F(0) - the membrane proton channel. F(1) has five subunits: alpha(3), beta(3), gamma(1), delta(1), epsilon(1). F(0) has three main subunits: a(1), b(2) and c(10-14). The alpha and beta chains form an alternating ring which encloses part of the gamma chain. F(1) is attached to F(0) by a central stalk formed by the gamma and epsilon chains, while a peripheral stalk is formed by the delta and b chains.

The protein localises to the cell inner membrane. Functionally, f(1)F(0) ATP synthase produces ATP from ADP in the presence of a proton or sodium gradient. F-type ATPases consist of two structural domains, F(1) containing the extramembraneous catalytic core and F(0) containing the membrane proton channel, linked together by a central stalk and a peripheral stalk. During catalysis, ATP synthesis in the catalytic domain of F(1) is coupled via a rotary mechanism of the central stalk subunits to proton translocation. This protein is part of the stalk that links CF(0) to CF(1). It either transmits conformational changes from CF(0) to CF(1) or is implicated in proton conduction. The chain is ATP synthase subunit delta from Parabacteroides distasonis (strain ATCC 8503 / DSM 20701 / CIP 104284 / JCM 5825 / NCTC 11152).